The primary structure comprises 665 residues: F-box/LRR-repeat protein 3 (665 aa).

An F-box domain is found at 11-60 (KPFDLLSEELVFIILDLISPNPSDLKSFSLTCKSFYQLESKHRGSLKPLR). LRR repeat units follow at residues 61 to 81 (SDYL…DLTF), 82 to 108 (CPRV…DLSR), 109 to 134 (SGSF…DLSN), 135 to 159 (ATEM…KLGR), 160 to 185 (CKML…SLKW), 186 to 211 (CVGV…DLSY), 214 to 235 (ITGK…LLEG), 236 to 261 (CFGV…DASS), 262 to 287 (CQNL…DLSH), 288 to 312 (CSSV…IRLD), 313 to 338 (GCSV…SLSK), 339 to 364 (CVSV…DITC), 365 to 390 (CRKL…KMES), 391 to 416 (CSLV…DLTD), 419 to 440 (IDDE…KLGI), 441 to 466 (CLNI…DLYR), 467 to 492 (SVGI…NISY), 493 to 517 (CQDI…ESRG), 518 to 543 (CPNI…DLKK), 544 to 569 (CPSI…NVSD), and 594 to 619 (SSGL…KLHA).

This chain is F-box/LRR-repeat protein 3 (FBL3), found in Arabidopsis thaliana (Mouse-ear cress).